A 120-amino-acid polypeptide reads, in one-letter code: Large ribosomal subunit protein uL18 (120 aa).

It belongs to the universal ribosomal protein uL18 family. As to quaternary structure, part of the 50S ribosomal subunit; part of the 5S rRNA/L5/L18/L25 subcomplex. Contacts the 5S and 23S rRNAs.

Functionally, this is one of the proteins that bind and probably mediate the attachment of the 5S RNA into the large ribosomal subunit, where it forms part of the central protuberance. In Bacillus pumilus (strain SAFR-032), this protein is Large ribosomal subunit protein uL18.